The following is a 182-amino-acid chain: Dihydrofolate reductase (182 aa).

A DHFR domain is found at 3–180; sequence RFNLIVAVCE…IKFEYKILEK (178 aa). NADP(+) is bound by residues Ala9 and 15–21; that span reads GIGIRGD. Residue 29 to 34 coordinates substrate; the sequence is ELKYFS. 53–55 lines the NADP(+) pocket; that stretch reads RKT. A substrate-binding site is contributed by Arg69. NADP(+)-binding positions include 75–77 and 113–120; these read STT and GGSGVYEE.

It belongs to the dihydrofolate reductase family. As to quaternary structure, monomer. Interacts with vg.

It catalyses the reaction (6S)-5,6,7,8-tetrahydrofolate + NADP(+) = 7,8-dihydrofolate + NADPH + H(+). Its pathway is cofactor biosynthesis; tetrahydrofolate biosynthesis; 5,6,7,8-tetrahydrofolate from 7,8-dihydrofolate: step 1/1. Its function is as follows. By interacting with vestigial (vg), may control genes involved in DNA replication. Functionally, key enzyme in folate metabolism. Catalyzes an essential reaction for de novo glycine and purine synthesis, and for DNA precursor synthesis. This is Dihydrofolate reductase (Dhfr) from Drosophila melanogaster (Fruit fly).